We begin with the raw amino-acid sequence, 101 residues long: Integration host factor subunit alpha (101 aa).

It belongs to the bacterial histone-like protein family. Heterodimer of an alpha and a beta chain.

In terms of biological role, this protein is one of the two subunits of integration host factor, a specific DNA-binding protein that functions in genetic recombination as well as in transcriptional and translational control. The sequence is that of Integration host factor subunit alpha from Saccharophagus degradans (strain 2-40 / ATCC 43961 / DSM 17024).